Here is a 1489-residue protein sequence, read N- to C-terminus: Type-2 histone deacetylase 1 (1489 aa).

Composition is skewed to low complexity over residues N135–G163, S190–L259, N281–T306, and S325–N399. Disordered regions lie at residues N135–L259, N281–Q556, N915–L935, N955–D1024, and S1151–C1185. The segment covering V400–H430 has biased composition (polar residues). Low complexity-rich tracts occupy residues Q431–S450, N486–N553, N915–N928, and N959–N988. 2 stretches are compositionally biased toward basic and acidic residues: residues R989–N1001 and I1010–D1024. The span at S1158–T1180 shows a compositional bias: low complexity. The active-site Proton acceptor is the H1232. The span at E1325–N1335 shows a compositional bias: acidic residues. Positions E1325–T1374 are disordered. Residues N1336 to N1367 are compositionally biased toward low complexity.

Belongs to the histone deacetylase family. HD type 2 subfamily.

It localises to the nucleus. Its subcellular location is the cytoplasm. It carries out the reaction N(6)-acetyl-L-lysyl-[histone] + H2O = L-lysyl-[histone] + acetate. Functionally, responsible for the deacetylation of lysine residues on the N-terminal part of the core histones (H2A, H2B, H3 and H4). Histone deacetylation plays an important role in transcriptional regulation, cell cycle progression and developmental events. Histone deacetylases act via the formation of large multiprotein complexes. The sequence is that of Type-2 histone deacetylase 1 (hdaD) from Dictyostelium discoideum (Social amoeba).